Reading from the N-terminus, the 86-residue chain is Selenoprotein W (86 aa).

The segment at residues 10-13 (CGGU) is a cross-link (cysteinyl-selenocysteine (Cys-Sec); redox-active). Sec13 is a non-standard amino acid (selenocysteine).

The protein belongs to the SelWTH family. Selenoprotein W subfamily.

The protein localises to the cytoplasm. Functionally, plays a role as a glutathione (GSH)-dependent antioxidant. May be involved in a redox-related process. May play a role in the myopathies of selenium deficiency. The sequence is that of Selenoprotein W from Danio rerio (Zebrafish).